A 198-amino-acid chain; its full sequence is Imidazoleglycerol-phosphate dehydratase (198 aa).

This sequence belongs to the imidazoleglycerol-phosphate dehydratase family.

Its subcellular location is the cytoplasm. The catalysed reaction is D-erythro-1-(imidazol-4-yl)glycerol 3-phosphate = 3-(imidazol-4-yl)-2-oxopropyl phosphate + H2O. Its pathway is amino-acid biosynthesis; L-histidine biosynthesis; L-histidine from 5-phospho-alpha-D-ribose 1-diphosphate: step 6/9. This chain is Imidazoleglycerol-phosphate dehydratase, found in Gluconacetobacter diazotrophicus (strain ATCC 49037 / DSM 5601 / CCUG 37298 / CIP 103539 / LMG 7603 / PAl5).